A 341-amino-acid polypeptide reads, in one-letter code: L-threonine 3-dehydrogenase (341 aa).

Residue C38 coordinates Zn(2+). Catalysis depends on charge relay system residues T40 and H43. H63, E64, C93, C96, C99, and C107 together coordinate Zn(2+). Residues I175, D195, R200, L262–I264, and I286–Y287 contribute to the NAD(+) site.

This sequence belongs to the zinc-containing alcohol dehydrogenase family. As to quaternary structure, homotetramer. Zn(2+) serves as cofactor.

It localises to the cytoplasm. It catalyses the reaction L-threonine + NAD(+) = (2S)-2-amino-3-oxobutanoate + NADH + H(+). It functions in the pathway amino-acid degradation; L-threonine degradation via oxydo-reductase pathway; glycine from L-threonine: step 1/2. Functionally, catalyzes the NAD(+)-dependent oxidation of L-threonine to 2-amino-3-ketobutyrate. This is L-threonine 3-dehydrogenase from Shewanella sediminis (strain HAW-EB3).